The sequence spans 347 residues: Probable inactive UDP-arabinopyranose mutase 2 (347 aa).

N-linked (Glc...) arginine glycosylation is present at Arg145.

Belongs to the RGP family. In terms of assembly, heteromers with UAM1 and UAM3. Post-translationally, is not reversibly glycosylated in vitro by UDP-glucose, UDP-xylose and UDP-galactose.

It is found in the golgi apparatus. Probable inactive UDP-L-arabinose mutase. Inactive in vitro, but associates with UAM1 and UAM3. The sequence is that of Probable inactive UDP-arabinopyranose mutase 2 from Oryza sativa subsp. japonica (Rice).